The primary structure comprises 102 residues: Aspartyl/glutamyl-tRNA(Asn/Gln) amidotransferase subunit C (102 aa).

Belongs to the GatC family. Heterotrimer of A, B and C subunits.

It catalyses the reaction L-glutamyl-tRNA(Gln) + L-glutamine + ATP + H2O = L-glutaminyl-tRNA(Gln) + L-glutamate + ADP + phosphate + H(+). It carries out the reaction L-aspartyl-tRNA(Asn) + L-glutamine + ATP + H2O = L-asparaginyl-tRNA(Asn) + L-glutamate + ADP + phosphate + 2 H(+). Functionally, allows the formation of correctly charged Asn-tRNA(Asn) or Gln-tRNA(Gln) through the transamidation of misacylated Asp-tRNA(Asn) or Glu-tRNA(Gln) in organisms which lack either or both of asparaginyl-tRNA or glutaminyl-tRNA synthetases. The reaction takes place in the presence of glutamine and ATP through an activated phospho-Asp-tRNA(Asn) or phospho-Glu-tRNA(Gln). In Leuconostoc citreum (strain KM20), this protein is Aspartyl/glutamyl-tRNA(Asn/Gln) amidotransferase subunit C.